The following is a 195-amino-acid chain: Peptide deformylase (195 aa).

Fe cation contacts are provided by Cys102 and His144. Residue Glu145 is part of the active site. His148 serves as a coordination point for Fe cation.

Belongs to the polypeptide deformylase family. The cofactor is Fe(2+).

It carries out the reaction N-terminal N-formyl-L-methionyl-[peptide] + H2O = N-terminal L-methionyl-[peptide] + formate. Functionally, removes the formyl group from the N-terminal Met of newly synthesized proteins. Requires at least a dipeptide for an efficient rate of reaction. N-terminal L-methionine is a prerequisite for activity but the enzyme has broad specificity at other positions. The protein is Peptide deformylase of Salinibacter ruber (strain DSM 13855 / M31).